A 142-amino-acid polypeptide reads, in one-letter code: Large ribosomal subunit protein uL13 (142 aa).

Belongs to the universal ribosomal protein uL13 family. As to quaternary structure, part of the 50S ribosomal subunit.

This protein is one of the early assembly proteins of the 50S ribosomal subunit, although it is not seen to bind rRNA by itself. It is important during the early stages of 50S assembly. This Shigella dysenteriae serotype 1 (strain Sd197) protein is Large ribosomal subunit protein uL13.